A 70-amino-acid chain; its full sequence is MSPLFVVLLIATTTFYHSDAFAVKRDHHMCDRTGKACLNNAECCRNEKCVLVDPNIRCFTVPCGTACVKR.

The signal sequence occupies residues 1-20 (MSPLFVVLLIATTTFYHSDA).

Expressed by the venom gland.

The protein resides in the secreted. The chain is Putative venom toxin Ts29 from Tityus serrulatus (Brazilian scorpion).